Here is a 270-residue protein sequence, read N- to C-terminus: 4-hydroxy-tetrahydrodipicolinate reductase (270 aa).

Residues 9–14 (GAGGRM) and Glu35 each bind NAD(+). NADP(+) is bound at residue Arg36. Residues 99–101 (GTT) and 123–126 (ASNY) contribute to the NAD(+) site. Catalysis depends on His156, which acts as the Proton donor/acceptor. His157 contacts (S)-2,3,4,5-tetrahydrodipicolinate. The Proton donor role is filled by Lys160. 166 to 167 (GT) is a binding site for (S)-2,3,4,5-tetrahydrodipicolinate.

The protein belongs to the DapB family.

It is found in the cytoplasm. The enzyme catalyses (S)-2,3,4,5-tetrahydrodipicolinate + NAD(+) + H2O = (2S,4S)-4-hydroxy-2,3,4,5-tetrahydrodipicolinate + NADH + H(+). It catalyses the reaction (S)-2,3,4,5-tetrahydrodipicolinate + NADP(+) + H2O = (2S,4S)-4-hydroxy-2,3,4,5-tetrahydrodipicolinate + NADPH + H(+). It participates in amino-acid biosynthesis; L-lysine biosynthesis via DAP pathway; (S)-tetrahydrodipicolinate from L-aspartate: step 4/4. In terms of biological role, catalyzes the conversion of 4-hydroxy-tetrahydrodipicolinate (HTPA) to tetrahydrodipicolinate. The polypeptide is 4-hydroxy-tetrahydrodipicolinate reductase (Histophilus somni (strain 129Pt) (Haemophilus somnus)).